The chain runs to 296 residues: Adrenocorticotropic hormone receptor (296 aa).

Topologically, residues 1-23 (MKHIINSYEHTNDTARNNSDCPD) are extracellular. 2 N-linked (GlcNAc...) asparagine glycosylation sites follow: Asn12 and Asn17. Cystine bridges form between Cys21/Cys253 and Cys245/Cys251. The helical transmembrane segment at 24 to 49 (VVLPEEIFFTISVIGILENLIVLLAV) threads the bilayer. At 50–58 (IKNKNLQSP) the chain is on the cytoplasmic side. A helical membrane pass occupies residues 59 to 79 (MYFFICSLAISDMLGSLYKIL). Over 80–104 (ENILIMFRNMGYLKPRGSFESTADD) the chain is Extracellular. Residues 105-126 (IIDCMFILSLLGSIFSLSVIAA) traverse the membrane as a helical segment. The Cytoplasmic segment spans residues 127 to 147 (DRYITIFHALQYHSIVTMRRT). Residues 148–168 (IITLTIIWMFCTGSGITMVIF) traverse the membrane as a helical segment. Topologically, residues 169–180 (SHHIPTVLTFTS) are extracellular. A helical transmembrane segment spans residues 181 to 199 (LFPLMLVFILCLYIHMFLL). Over 200 to 217 (ARSHARKISTLPRTNMKG) the chain is Cytoplasmic. A helical membrane pass occupies residues 218–244 (AMTLTILLGVFIFCWAPFVLHVLLMTF). Topologically, residues 245–256 (CPNNPYCVCYMS) are extracellular. Residues 257–278 (LFQVNGMLIMCNAVIDPFIYAF) traverse the membrane as a helical segment. Residues 279 to 296 (RSPELRDAFKRMLFCNRY) are Cytoplasmic-facing. Cys293 carries S-palmitoyl cysteine lipidation.

Belongs to the G-protein coupled receptor 1 family. In terms of assembly, homodimer. Interacts with corticotropin (ACTH). Interacts with MRAP; this interaction targets MC2R to the plasma membrane. Interacts with MRAP2; competing with MRAP for binding to MC2R and impairing the binding of corticotropin (ACTH). In terms of processing, ubiquitinated by MGRN1 that may be involved in post-endocytic trafficking and/or degradation of internalized receptor.

The protein localises to the cell membrane. In terms of biological role, hormone receptor primarily expressed in adrenal cortex that plays a key role in regulating adrenocortical function. Upon corticotropin (ACTH) binding, facilitates the release of adrenal glucocorticoids, including cortisol and corticosterone. In addition, MC2R is required for fetal and neonatal adrenal gland development. Mechanistically, activates adenylate cyclase (cAMP), the MAPK cascade as well as the cAMP-dependent protein kinase A pathway leading to steroidogenic factor 1/NR5A1-mediated transcriptional activation. The polypeptide is Adrenocorticotropic hormone receptor (Mc2r) (Mus musculus (Mouse)).